A 232-amino-acid polypeptide reads, in one-letter code: Expansin-YoaJ (232 aa).

The N-terminal stretch at 1-25 is a signal peptide; it reads MKKIMSAFVGMVLLTIFCFSPQASA. One can recognise an Expansin-like EG45 domain in the interval 58 to 127; that stretch reads ITAINPADLN…MKDGKINIKW (70 aa).

The protein localises to the secreted. Its subcellular location is the cell wall. Functionally, may promote colonization of plant roots. May cause loosening and extension of plant cell walls by disrupting non-covalent bonding between cellulose microfibrils and matrix glucans. Has very low expansin activity (in vitro). No enzymatic activity has been found. Binds to peptidoglycan and to plant cell walls. The protein is Expansin-YoaJ (yoaJ) of Bacillus subtilis (strain 168).